Here is a 256-residue protein sequence, read N- to C-terminus: Acetyl-coenzyme A carboxylase carboxyl transferase subunit beta 2 (256 aa).

The 256-residue stretch at 1–256 (MTVKCNKCKE…LAIHAETVSA (256 aa)) folds into the CoA carboxyltransferase N-terminal domain. Residues cysteine 5, cysteine 8, cysteine 24, and cysteine 27 each coordinate Zn(2+). A C4-type zinc finger spans residues 5–27 (CNKCKEEINKEDLEKNYYICPLC).

Belongs to the AccD/PCCB family. As to quaternary structure, acetyl-CoA carboxylase is a heterohexamer composed of biotin carboxyl carrier protein (AccB), biotin carboxylase (AccC) and two subunits each of ACCase subunit alpha (AccA) and ACCase subunit beta (AccD). Requires Zn(2+) as cofactor.

The protein localises to the cytoplasm. It carries out the reaction N(6)-carboxybiotinyl-L-lysyl-[protein] + acetyl-CoA = N(6)-biotinyl-L-lysyl-[protein] + malonyl-CoA. Its pathway is lipid metabolism; malonyl-CoA biosynthesis; malonyl-CoA from acetyl-CoA: step 1/1. Its function is as follows. Component of the acetyl coenzyme A carboxylase (ACC) complex. Biotin carboxylase (BC) catalyzes the carboxylation of biotin on its carrier protein (BCCP) and then the CO(2) group is transferred by the transcarboxylase to acetyl-CoA to form malonyl-CoA. The protein is Acetyl-coenzyme A carboxylase carboxyl transferase subunit beta 2 of Lachnospira eligens (strain ATCC 27750 / DSM 3376 / VPI C15-48 / C15-B4) (Eubacterium eligens).